We begin with the raw amino-acid sequence, 429 residues long: Ribosomal RNA small subunit methyltransferase B (429 aa).

S-adenosyl-L-methionine is bound by residues Cys254 to Lys260, Asp277, Asp303, and Asp322. The active-site Nucleophile is the Cys375. Residues Ala397–Asp419 form a disordered region. A compositionally biased stretch (polar residues) spans Glu400–Leu412.

It belongs to the class I-like SAM-binding methyltransferase superfamily. RsmB/NOP family.

Its subcellular location is the cytoplasm. The catalysed reaction is cytidine(967) in 16S rRNA + S-adenosyl-L-methionine = 5-methylcytidine(967) in 16S rRNA + S-adenosyl-L-homocysteine + H(+). In terms of biological role, specifically methylates the cytosine at position 967 (m5C967) of 16S rRNA. The polypeptide is Ribosomal RNA small subunit methyltransferase B (Salmonella enteritidis PT4 (strain P125109)).